The sequence spans 466 residues: Argininosuccinate lyase (466 aa).

Ser-27, Asn-114, and Thr-159 together coordinate 2-(N(omega)-L-arginino)succinate. His-160 (proton acceptor) is an active-site residue. Ser-281 acts as the Proton donor in catalysis. 2-(N(omega)-L-arginino)succinate contacts are provided by Asn-289, Tyr-321, Gln-326, and Lys-329.

It belongs to the lyase 1 family. Argininosuccinate lyase subfamily. In terms of assembly, homotetramer. Post-translationally, the N-terminus is blocked. In terms of tissue distribution, eye lens.

It catalyses the reaction 2-(N(omega)-L-arginino)succinate = fumarate + L-arginine. The protein operates within amino-acid biosynthesis; L-arginine biosynthesis; L-arginine from L-ornithine and carbamoyl phosphate: step 3/3. In terms of biological role, delta crystallin, the principal crystallin in embryonic lens, is found only in birds and reptiles. This protein also functions as an enzymatically active argininosuccinate lyase, but it has a low activity. The chain is Argininosuccinate lyase (ASL) from Columba livia (Rock dove).